Consider the following 459-residue polypeptide: tRNA modification GTPase MnmE (459 aa).

(6S)-5-formyl-5,6,7,8-tetrahydrofolate contacts are provided by Arg-22, Glu-85, and Arg-124. Residues Gly-221 to Phe-380 form the TrmE-type G domain. Asn-231 provides a ligand contact to K(+). Residues Asn-231–Ser-236, Thr-250–Thr-256, and Asp-275–Gly-278 contribute to the GTP site. Ser-235 contacts Mg(2+). K(+)-binding residues include Thr-250, Val-252, and Thr-255. Thr-256 is a binding site for Mg(2+). Lys-459 contacts (6S)-5-formyl-5,6,7,8-tetrahydrofolate.

This sequence belongs to the TRAFAC class TrmE-Era-EngA-EngB-Septin-like GTPase superfamily. TrmE GTPase family. In terms of assembly, homodimer. Heterotetramer of two MnmE and two MnmG subunits. It depends on K(+) as a cofactor.

Its subcellular location is the cytoplasm. Functionally, exhibits a very high intrinsic GTPase hydrolysis rate. Involved in the addition of a carboxymethylaminomethyl (cmnm) group at the wobble position (U34) of certain tRNAs, forming tRNA-cmnm(5)s(2)U34. This is tRNA modification GTPase MnmE from Staphylococcus aureus (strain MW2).